Consider the following 293-residue polypeptide: NAD-dependent protein deacetylase (293 aa).

Residues 1–284 (MTVAITQTGP…QPPDPLHTAT (284 aa)) enclose the Deacetylase sirtuin-type domain. NAD(+)-binding positions include 27–47 (GAGC…GGWK) and 105–108 (QNVD). H123 (proton acceptor) is an active-site residue. Zn(2+) is bound by residues C131, C134, C182, and C185. NAD(+) contacts are provided by residues 222-224 (GSS), 248-250 (NFG), and C266.

Belongs to the sirtuin family. Class II subfamily. It depends on Zn(2+) as a cofactor.

Its subcellular location is the cytoplasm. The enzyme catalyses N(6)-acetyl-L-lysyl-[protein] + NAD(+) + H2O = 2''-O-acetyl-ADP-D-ribose + nicotinamide + L-lysyl-[protein]. In terms of biological role, NAD-dependent protein deacetylase which modulates the activities of several enzymes which are inactive in their acetylated form. The protein is NAD-dependent protein deacetylase of Xanthomonas campestris pv. campestris (strain B100).